Consider the following 529-residue polypeptide: Arginine--tRNA ligase (529 aa).

The short motif at alanine 113–histidine 123 is the 'HIGH' region element.

The protein belongs to the class-I aminoacyl-tRNA synthetase family. In terms of assembly, monomer.

It is found in the cytoplasm. The catalysed reaction is tRNA(Arg) + L-arginine + ATP = L-arginyl-tRNA(Arg) + AMP + diphosphate. The sequence is that of Arginine--tRNA ligase from Campylobacter curvus (strain 525.92).